The chain runs to 408 residues: Protein CNPPD1 (408 aa).

The helical transmembrane segment at 233-253 (CLLAVAYVSSVALAVASMAVI) threads the bilayer.

Belongs to the CNPPD1 family.

The protein resides in the membrane. This is Protein CNPPD1 (Cnppd1) from Rattus norvegicus (Rat).